A 172-amino-acid polypeptide reads, in one-letter code: ATP synthase subunit b (172 aa).

Residues 11–30 (LIAQIINFVIVLWVLNRFAF) form a helical membrane-spanning segment.

Belongs to the ATPase B chain family. In terms of assembly, F-type ATPases have 2 components, F(1) - the catalytic core - and F(0) - the membrane proton channel. F(1) has five subunits: alpha(3), beta(3), gamma(1), delta(1), epsilon(1). F(0) has three main subunits: a(1), b(2) and c(10-14). The alpha and beta chains form an alternating ring which encloses part of the gamma chain. F(1) is attached to F(0) by a central stalk formed by the gamma and epsilon chains, while a peripheral stalk is formed by the delta and b chains.

Its subcellular location is the cell inner membrane. Functionally, f(1)F(0) ATP synthase produces ATP from ADP in the presence of a proton or sodium gradient. F-type ATPases consist of two structural domains, F(1) containing the extramembraneous catalytic core and F(0) containing the membrane proton channel, linked together by a central stalk and a peripheral stalk. During catalysis, ATP synthesis in the catalytic domain of F(1) is coupled via a rotary mechanism of the central stalk subunits to proton translocation. In terms of biological role, component of the F(0) channel, it forms part of the peripheral stalk, linking F(1) to F(0). This is ATP synthase subunit b from Methylacidiphilum infernorum (isolate V4) (Methylokorus infernorum (strain V4)).